Reading from the N-terminus, the 590-residue chain is DEAD-box ATP-dependent RNA helicase 27 (590 aa).

The tract at residues 1–92 (MAPAPATTSS…EKGNEGGSGI (92 aa)) is disordered. Over residues 27–62 (SDSESEELSYDTAAADEEEGEEEAPNQMEELEEEQE) the composition is skewed to acidic residues. Positions 40–87 (AADEEEGEEEAPNQMEELEEEQEEEKKEKKQKKEMSKEKKRKKEKGNE) form a coiled coil. A compositionally biased stretch (basic and acidic residues) spans 63–76 (EEKKEKKQKKEMSK). The Q motif motif lies at 96 to 124 (MLFSELGVSEPTARAIREMNYTYLTQIQA). The region spanning 127-302 (IPHLLNGKDV…KLSFEKNEES (176 aa)) is the Helicase ATP-binding domain. 140-147 (AKTGSGKT) is an ATP binding site. The short motif at 250–253 (DEAD) is the DEAD box element. A Helicase C-terminal domain is found at 335 to 488 (RFLVLYAFLK…NKVPNLQSHL (154 aa)). Residues 551–590 (SASKHRRKMRKVDGGRRHGISAANPYGRKGGDDKRQFARF) form a disordered region. Positions 579–590 (KGGDDKRQFARF) are enriched in basic and acidic residues.

The protein belongs to the DEAD box helicase family. DDX18/HAS1 subfamily.

The enzyme catalyses ATP + H2O = ADP + phosphate + H(+). This Oryza sativa subsp. japonica (Rice) protein is DEAD-box ATP-dependent RNA helicase 27.